A 422-amino-acid polypeptide reads, in one-letter code: Vitamin D3 receptor (422 aa).

The segment at residues 21-96 (PRICGVCGDR…IGMMKEFILT (76 aa)) is a DNA-binding region (nuclear receptor). Zn(2+)-binding residues include cysteine 24, cysteine 27, cysteine 41, cysteine 44, cysteine 60, cysteine 66, cysteine 76, and cysteine 79. 2 NR C4-type zinc fingers span residues 24 to 44 (CGVC…CEGC) and 60 to 84 (CPFN…LKRC). The tract at residues 97-126 (DEEVQRKREMIMKRKEEEALKDSLRPKLSE) is hinge. Residues 127 to 418 (EQQHIIAILL…LTPLVLEVFG (292 aa)) enclose the NR LBD domain. Calcitriol is bound at residue tyrosine 143. Positions 161–185 (VSTGSYSPRPTLSFSGDSSSNSDLY) are disordered. Polar residues predominate over residues 162–172 (STGSYSPRPTL). Residues 173 to 182 (SFSGDSSSNS) are compositionally biased toward low complexity. Serine 232 serves as a coordination point for calcitriol. Residues 241 to 259 (KMIPGFRDLTSDDQIVLLK) are interaction with coactivator LXXLL motif. The calcitriol site is built by arginine 269, serine 273, histidine 300, and histidine 392. A 9aaTAD motif is present at residues 411–419 (PLVLEVFGN).

The protein belongs to the nuclear hormone receptor family. NR1 subfamily. In terms of assembly, homodimer in the absence of bound vitamin D3. Heterodimer with RXRA after vitamin D3 binding. Interacts with MED1, NCOA1, NCOA2, NCOA3 and NCOA6 coactivators, leading to a strong increase of transcription of target genes. Interacts with the corepressor NCOR1. Interacts with SNW1. Interacts with IRX4, the interaction does not affect its transactivation activity. Interacts with CRY1. Interacts with CRY2 in a ligand-dependent manner. Ubiquitinated by UBR5, leading to its degradation: UBR5 specifically recognizes and binds ligand-bound VDR when it is not associated with coactivators (NCOAs). In presence of NCOAs, the UBR5-degron is not accessible, preventing its ubiquitination and degradation.

The protein resides in the nucleus. Its subcellular location is the cytoplasm. In terms of biological role, nuclear receptor for calcitriol, the active form of vitamin D3 which mediates the action of this vitamin on cells. Enters the nucleus upon vitamin D3 binding where it forms heterodimers with the retinoid X receptor/RXR. The VDR-RXR heterodimers bind to specific response elements on DNA and activate the transcription of vitamin D3-responsive target genes. Plays a central role in calcium homeostasis. Also functions as a receptor for the secondary bile acid lithocholic acid (LCA) and its metabolites. The polypeptide is Vitamin D3 receptor (Vdr) (Mus musculus (Mouse)).